We begin with the raw amino-acid sequence, 353 residues long: MSHILDKIDTVYPFPPKPIPLTQDEKAAYIASIKQLLNEKDAVLIAHYYTDPEIQALAEETGGFVGDSLEMAKFGNRHPAGTLIIAGVRFMGESAKILTPEKRILMPTLEAECSLDLGCPADKFTEFCDAHPDHTVVVYANTSAAVKARADWVVTSSIALEIVEHLDAEDKPIIWGPDRHLGSYIANKTGADMLLWQGECVVHDEFSADALRKMKAVYPDAAILVHPESPASVVELADAVGSTSQLIKAAKELPQQKMIVATDKGIFFKMQQLVPEKELIEAPTAGAGATCRSCAHCPWMAMNGLKAIETALREGGEQHEIFVDEALRVKSLIPLNRMLDFAEKLNMQVKGNA.

Positions 47 and 68 each coordinate iminosuccinate. Cysteine 113 is a [4Fe-4S] cluster binding site. Iminosuccinate contacts are provided by residues 139–141 (YAN) and serine 156. Cysteine 200 serves as a coordination point for [4Fe-4S] cluster. Iminosuccinate is bound by residues 226-228 (HPE) and threonine 243. Cysteine 297 contacts [4Fe-4S] cluster.

This sequence belongs to the quinolinate synthase family. Type 1 subfamily. The cofactor is [4Fe-4S] cluster.

The protein localises to the cytoplasm. The catalysed reaction is iminosuccinate + dihydroxyacetone phosphate = quinolinate + phosphate + 2 H2O + H(+). Its pathway is cofactor biosynthesis; NAD(+) biosynthesis; quinolinate from iminoaspartate: step 1/1. Its function is as follows. Catalyzes the condensation of iminoaspartate with dihydroxyacetone phosphate to form quinolinate. This is Quinolinate synthase from Vibrio vulnificus (strain CMCP6).